The chain runs to 720 residues: MAHLVEGTSIIDGKWQLPILVTDLNIQRSISVLGNLNVGGLMLELVSECDVERDWSDHALWWPEKRRWLQHTRSTLDQNGITAETQLEFTPMHKEARIQLPDMQMIDARVDFSVNSFKATKKLCRDLGIRYSEELSLKRYIPPEDLRRGTSDADNMNGPLSMRPGEESVGPMTLRKAAPIFASQSNLDMRRRGQSPALSQSGHIFNAHEMGTLPRHGTLPRGVSPSPGAYNDTMRRTPIMPSISFSEGLENEQFDDALIHSPRLAPSRDTPVFRPQNYVEKAAINRGWLDSSRSLMEQGIFEGDIILLRFKFMNFFDLNPKYDPVRINQLYEQAKWSILLDEFDHTEEEATLFAALQLQATLQRDSPEPEENNKDDVDILLDELEQNLDAAALNRRSDLTQVPELADYLKYMKPKKLAAFKGFKRAFFSFRDLYLSYHQSSSDVNSAPLGHFSLKGCEVSQDVSVGQQKYHIKLLLPTAEGMIDFILKCDSEHQYARWMAACRLASRGKSMADSSYQQEVESIKNLLKMQSGNGNENGNSNTASRKAAAVKLPNDFNVDEYISSKYVRRARSKQQIQQRVSDAHGNVRQLTATEAKLQYIRAWQALPEHGIHYFIVRFRNARKAELVAVAVNRLAKLNMDNGESLKTWRFANMKKWHVNWEIRHLKIQFEDEDIEFKPLSADCKVVHEFIGGYIFLSMRSKEHSQNLDEELFHKLTGGWA.

2 disordered regions span residues aspartate 145 to glycine 170 and methionine 210 to arginine 236. Positions tryptophan 288–phenylalanine 614 constitute an FERM domain. Positions valine 402–arginine 507 constitute a PH domain.

The protein belongs to the kindlin family. Interacts with pat-4/ILK. Probably forms a complex with pat-4 and pat-6. Component of an integrin containing attachment complex, composed of at least pat-2, pat-3, pat-4, pat-6, unc-52, unc-97 and unc-112. As to expression, mainly expressed in muscle cells in both embryos and adults.

The protein resides in the cell membrane. The protein localises to the cytoplasm. Its subcellular location is the myofibril. It is found in the sarcomere. It localises to the m line. Its function is as follows. Component of an integrin containing attachment complex, which is required for muscle development and maintenance. Probable regulator of cell-extracellular matrix adhesion. Required during initial muscle assembly to form dense bodies and M-lines. The sequence is that of Protein unc-112 from Caenorhabditis elegans.